The primary structure comprises 336 residues: Probable G-protein coupled receptor 160 (336 aa).

At 1–21 (MTALPSKNCSFQYQSHQAPRS) the chain is on the extracellular side. An N-linked (GlcNAc...) asparagine glycan is attached at asparagine 8. Residues 22 to 42 (LDATCLLLLIILGKVLLNVLI) form a helical membrane-spanning segment. Residues 43-56 (LRVKRKDTSWSFME) are Cytoplasmic-facing. The helical transmembrane segment at 57–77 (YFCFSLALVDLLLLVNISVLT) threads the bilayer. At 78-95 (YFRDFVVLGIRFTNYHIC) the chain is on the extracellular side. The chain crosses the membrane as a helical span at residues 96–116 (LLTQIVSFAYGFLHYPVCSLA). The Cytoplasmic portion of the chain corresponds to 117 to 136 (CIDYWCNLSRATKPSSRWQK). A helical membrane pass occupies residues 137–157 (LLYLLTVILTWISVLAYVLGD). Topologically, residues 158 to 187 (PAISASLKTHKTSVNQCPSYVSTQSHWLSL) are extracellular. Residues 188–208 (SMLMILSVAFLISWQEVVALI) form a helical membrane-spanning segment. The Cytoplasmic segment spans residues 209-243 (QAIRIASYKNKAVLYFPFPPHTSYTVSPRAVLLPR). A helical membrane pass occupies residues 244–264 (LIVCFLGTWFPFVALQVLILS). Residues 265–272 (LRVQIPAY) lie on the Extracellular side of the membrane. Residues 273-293 (IEMNVPWLYFVNSFLIAAVYW) traverse the membrane as a helical segment. Residues 294–336 (FNCHKLYWRDGMFPVDPFINWKCCFVPVHRLKQVERPMSIIIC) are Cytoplasmic-facing.

Belongs to the G-protein coupled receptor 1 family.

Its subcellular location is the cell membrane. Orphan receptor. This chain is Probable G-protein coupled receptor 160 (Gpr160), found in Rattus norvegicus (Rat).